Reading from the N-terminus, the 89-residue chain is UPF0223 protein BCA_4066 (89 aa).

It belongs to the UPF0223 family.

The sequence is that of UPF0223 protein BCA_4066 from Bacillus cereus (strain 03BB102).